The primary structure comprises 442 residues: D-serine dehydratase (442 aa).

An N6-(pyridoxal phosphate)lysine modification is found at lysine 118.

It belongs to the serine/threonine dehydratase family. DsdA subfamily. In terms of assembly, monomer. Requires pyridoxal 5'-phosphate as cofactor.

It carries out the reaction D-serine = pyruvate + NH4(+). This is D-serine dehydratase from Shigella flexneri serotype 5b (strain 8401).